Reading from the N-terminus, the 183-residue chain is Thioredoxin-like protein CITRX, chloroplastic (183 aa).

Residues 1-81 (MALVQSRTFP…REDYLVKKLS (81 aa)) constitute a chloroplast transit peptide. A Thioredoxin domain is found at 82–183 (AQELQELVKG…MMHDIIDNEM (102 aa)). Active-site nucleophile residues include Cys-106 and Cys-109. Cysteines 106 and 109 form a disulfide.

This sequence belongs to the thioredoxin family. Plant CITRX-type subfamily. As to quaternary structure, interacts with FLN1 and FLN2. Interacts with MRL7.

The protein localises to the plastid. Its subcellular location is the chloroplast. Its function is as follows. Thiol-disulfide oxidoreductase that plays a role in proper chloroplast development, most likely through regulating plastid-encoded polymerase (PEP) dependent chloroplast transcription. Acts as a component of the transcriptionally active plastid chromosome that is required for plastid gene expression. This chain is Thioredoxin-like protein CITRX, chloroplastic, found in Arabidopsis thaliana (Mouse-ear cress).